The chain runs to 135 residues: Hemoglobin subunit beta-2 (135 aa).

One can recognise a Globin domain in the interval His2 to His135. Residues His57 and His81 each contribute to the heme b site.

Belongs to the globin family. In terms of assembly, hb 2 is a heterotetramer of two alpha and two beta-2 chains. Red blood cells (at protein level).

Its function is as follows. Involved in oxygen transport from gills to the various peripheral tissues. In Somniosus microcephalus (Greenland sleeper shark), this protein is Hemoglobin subunit beta-2.